The following is an 80-amino-acid chain: Serine protease inhibitor Kazal-type 6 (80 aa).

An N-terminal signal peptide occupies residues 1 to 23 (MKTSGVFLLLSLALFCFFSGVFG). Gln-24 carries the pyrrolidone carboxylic acid modification. The 57-residue stretch at 24 to 80 (QGAQVDCAEFKDPKVYCTRESNPHCGSDGQTYGNKCAFCKAVMKSGGKINLKHRGKC) folds into the Kazal-like domain. Cystine bridges form between Cys-30–Cys-62, Cys-40–Cys-59, and Cys-48–Cys-80.

Seminal plasma.

It is found in the secreted. Functionally, serine protease inhibitor selective for kallikreins. Efficiently inhibits KLK4, KLK5, KLK6, KLK7, KLK12, KLK13 and KLK14. Doesn't inhibit KLK8. Inhibits acrosin, trypsin, and chymotrypsin. In Bos taurus (Bovine), this protein is Serine protease inhibitor Kazal-type 6 (SPINK6).